Here is a 461-residue protein sequence, read N- to C-terminus: Calcitonin gene-related peptide type 1 receptor (461 aa).

The N-terminal stretch at 1 to 22 is a signal peptide; that stretch reads MEKKCTLYFLVLLPFFMILVTA. The Extracellular segment spans residues 23–139; the sequence is ELEESPEDSI…NTHEKVKTAL (117 aa). 3 cysteine pairs are disulfide-bonded: Cys48–Cys74, Cys65–Cys105, and Cys88–Cys127. 3 N-linked (GlcNAc...) asparagine glycosylation sites follow: Asn66, Asn118, and Asn123. Residues 140–164 traverse the membrane as a helical segment; the sequence is NLFYLTIIGHGLSIASLLISLGIFF. Over 165–175 the chain is Cytoplasmic; the sequence is YFKSLSCQRIT. A helical membrane pass occupies residues 176–198; the sequence is LHKNLFFSFVCNSVVTIIHLTAV. The Extracellular portion of the chain corresponds to 199-209; that stretch reads ANNQALVATNP. A helical transmembrane segment spans residues 210-238; the sequence is VSCKVSQFIHLYLMGCNYFWMLCEGIYLH. The Cytoplasmic segment spans residues 239–252; sequence TLIVVAVFAEKQHL. Residues 253 to 273 traverse the membrane as a helical segment; sequence MWYYFLGWGFPLIPACIHAIA. Residues 274 to 289 lie on the Extracellular side of the membrane; the sequence is RSLYYNDNCWISSDTH. The segment at 288–289 is required for RAMP3 interaction; it reads TH. A helical transmembrane segment spans residues 290–314; that stretch reads LLYIIHGPICAALLVNLFFLLNIVR. The Cytoplasmic segment spans residues 315–329; the sequence is VLITKLKVTHQAESN. The chain crosses the membrane as a helical span at residues 330-351; the sequence is LYMKAVRATLILVPLLGIEFVL. Topologically, residues 352 to 366 are extracellular; sequence IPWRPEGKIAEEVYD. A helical transmembrane segment spans residues 367–387; it reads YIMHILMHFQGLLVSTIFCFF. 2 positions are modified to phosphoserine: Ser420 and Ser445.

The protein belongs to the G-protein coupled receptor 2 family. In terms of assembly, heterodimer of CALCRL and RAMP1; the receptor complex functions as CGRP receptor. Heterodimer of CALCRL and RAMP2 or CALCRL and RAMP3; the complexes function as adrenomedullin receptor. In terms of tissue distribution, predominantly expressed in the lung and heart.

Its subcellular location is the cell membrane. Its function is as follows. G protein-coupled receptor which specificity is determined by its interaction with receptor-activity-modifying proteins (RAMPs). Together with RAMP1, form the receptor complex for calcitonin-gene-related peptides CALCA/CGRP1 and CALCB/CGRP2. Together with RAMP2 or RAMP3, function as receptor complexes for adrenomedullin (ADM and ADM2). Ligand binding causes a conformation change that triggers signaling via guanine nucleotide-binding proteins (G proteins) and modulates the activity of downstream effectors. Activates cAMP-dependent pathway. This is Calcitonin gene-related peptide type 1 receptor from Homo sapiens (Human).